The primary structure comprises 516 residues: Calcitonin receptor (516 aa).

Residues methionine 1–glutamine 24 form the signal peptide. Topologically, residues alanine 25–tyrosine 146 are extracellular. N-linked (GlcNAc...) asparagine glycans are attached at residues asparagine 28, asparagine 73, asparagine 125, and asparagine 130. 3 disulfides stabilise this stretch: cysteine 55/cysteine 81, cysteine 72/cysteine 112, and cysteine 95/cysteine 134. The chain crosses the membrane as a helical span at residues valine 147–isoleucine 169. At phenylalanine 170–valine 181 the chain is on the cytoplasmic side. Residues threonine 182 to leucine 202 traverse the membrane as a helical segment. Topologically, residues valine 203–cysteine 256 are extracellular. A disulfide bridge links cysteine 256 with cysteine 326. The chain crosses the membrane as a helical span at residues lysine 257–isoleucine 279. Residues tyrosine 280–leucine 296 lie on the Cytoplasmic side of the membrane. The helical transmembrane segment at arginine 297 to threonine 317 threads the bilayer. Residues arginine 318–histidine 333 are Extracellular-facing. Residues leucine 334–valine 357 traverse the membrane as a helical segment. Topologically, residues arginine 358 to lysine 377 are cytoplasmic. A helical membrane pass occupies residues alanine 378–phenylalanine 396. The Extracellular portion of the chain corresponds to proline 397–valine 404. The chain crosses the membrane as a helical span at residues leucine 405–cysteine 431. Over asparagine 432 to alanine 516 the chain is Cytoplasmic. The interval arginine 489–alanine 516 is disordered.

The protein belongs to the G-protein coupled receptor 2 family. As to quaternary structure, heterodimer of CALCR and RAMP1, RAMP2 or RAMP3; the receptor complexes function as AMYR1, AMYR2 and AMYR3 receptors, respectively, and respond to amylin/IAPP, calcitonin/CT and CGRP1 ligands. Interacts with GPRASP2.

The protein localises to the cell membrane. G protein-coupled receptor activated by ligand peptides amylin (IAPP), calcitonin (CT/CALCA) and calcitonin gene-related peptide type 1 (CGRP1/CALCA). CALCR interacts with receptor-activity-modifying proteins RAMP1, 2 and 3 to form receptor complexes AMYR1, 2 and 3, respectively. IAPP, CT and CGRP1 activate CALCR and AMYRs with distinct modes of receptor activation resulting in specific phenotypes. Ligand binding causes a conformation change that triggers signaling via guanine nucleotide-binding proteins (G proteins) and modulates the activity of downstream effectors. Activates cAMP-dependent pathway. The chain is Calcitonin receptor from Rattus norvegicus (Rat).